Here is a 366-residue protein sequence, read N- to C-terminus: Chalcone synthase B (366 aa).

The active site involves Cys-172.

This sequence belongs to the thiolase-like superfamily. Chalcone/stilbene synthases family.

It catalyses the reaction (E)-4-coumaroyl-CoA + 3 malonyl-CoA + 3 H(+) = 2',4,4',6'-tetrahydroxychalcone + 3 CO2 + 4 CoA. It participates in secondary metabolite biosynthesis; flavonoid biosynthesis. Functionally, the primary product of this enzyme is 4,2',4',6'-tetrahydroxychalcone (also termed naringenin-chalcone or chalcone) which can under specific conditions spontaneously isomerize into naringenin. This Ipomoea trifida (Morning glory) protein is Chalcone synthase B (CHSB).